A 350-amino-acid polypeptide reads, in one-letter code: Protein-glutamate methylesterase/protein-glutamine glutaminase 6 (350 aa).

The Response regulatory domain maps to 11–126 (RVLVVDDSAA…LAPVREELLE (116 aa)). Asp-62 carries the 4-aspartylphosphate modification. In terms of domain architecture, CheB-type methylesterase spans 150–347 (ELEPARVAVV…ARLVEFARDA (198 aa)). Catalysis depends on residues Ser-162, His-189, and Asp-289.

This sequence belongs to the CheB family. Post-translationally, phosphorylated by CheA. Phosphorylation of the N-terminal regulatory domain activates the methylesterase activity.

It localises to the cytoplasm. The enzyme catalyses [protein]-L-glutamate 5-O-methyl ester + H2O = L-glutamyl-[protein] + methanol + H(+). The catalysed reaction is L-glutaminyl-[protein] + H2O = L-glutamyl-[protein] + NH4(+). Its function is as follows. Involved in chemotaxis. Part of a chemotaxis signal transduction system that modulates chemotaxis in response to various stimuli. Catalyzes the demethylation of specific methylglutamate residues introduced into the chemoreceptors (methyl-accepting chemotaxis proteins or MCP) by CheR. Also mediates the irreversible deamidation of specific glutamine residues to glutamic acid. The protein is Protein-glutamate methylesterase/protein-glutamine glutaminase 6 of Anaeromyxobacter dehalogenans (strain 2CP-C).